The following is a 186-amino-acid chain: Peptidyl-tRNA hydrolase (186 aa).

Tyr14 is a binding site for tRNA. His19 acts as the Proton acceptor in catalysis. TRNA contacts are provided by Tyr60 and Asn62.

The protein belongs to the PTH family. In terms of assembly, monomer.

It localises to the cytoplasm. The catalysed reaction is an N-acyl-L-alpha-aminoacyl-tRNA + H2O = an N-acyl-L-amino acid + a tRNA + H(+). Hydrolyzes ribosome-free peptidyl-tRNAs (with 1 or more amino acids incorporated), which drop off the ribosome during protein synthesis, or as a result of ribosome stalling. Functionally, catalyzes the release of premature peptidyl moieties from peptidyl-tRNA molecules trapped in stalled 50S ribosomal subunits, and thus maintains levels of free tRNAs and 50S ribosomes. This is Peptidyl-tRNA hydrolase from Mycoplasmopsis pulmonis (strain UAB CTIP) (Mycoplasma pulmonis).